A 536-amino-acid polypeptide reads, in one-letter code: Thiamine transport system permease protein ThiP (536 aa).

12 helical membrane-spanning segments follow: residues 12–32, 58–78, 95–115, 134–154, 199–219, 240–260, 293–313, 334–354, 374–394, 404–424, 463–483, and 506–526; these read WLIPGVSATTLVVAVALAAFL, FSFWQAFLSALLSVIPAIFLA, LCAMTLILPVLVAVFGILSVY, FSPYGLQGILLAHVFFNLPMA, VAALIFMLCFASFATVLSLGG, PARAAMLALLQMVCCLGLVLL, VLIVLALLLLLPPLLAVIVDG, SLRIALAAGVLCVVLTMMLLW, SGMLILAMPGIVLATGFFLLL, ADGIVIFTNALMAIPYALKVL, AQALAFACVLSIGDFGVVALF, and DGAVTALILLLLCFLLFTVIE. Residues 56–261 form the ABC transmembrane type-1 1 domain; the sequence is VRFSFWQAFL…VCCLGLVLLS (206 aa). An ABC transmembrane type-1 2 domain is found at 331–525; sequence LWTSLRIALA…LLCFLLFTVI (195 aa).

It belongs to the binding-protein-dependent transport system permease family. CysTW subfamily. In terms of assembly, the complex is composed of two ATP-binding proteins (ThiQ), two transmembrane proteins (ThiP) and a solute-binding protein (ThiB).

It is found in the cell inner membrane. Its activity is regulated as follows. Transport is inhibited by the sulfhydryl-specific modifier N-ethylmaleimide. In terms of biological role, part of the ABC transporter complex ThiBPQ involved in thiamine import. Probably responsible for the translocation of the substrate across the membrane. This chain is Thiamine transport system permease protein ThiP (thiP), found in Escherichia coli (strain K12).